A 301-amino-acid polypeptide reads, in one-letter code: Probable aspartoacylase (301 aa).

Zn(2+) is bound by residues histidine 13 and glutamate 16. Residues arginine 54 and 61–62 (NR) contribute to the substrate site. Residue histidine 105 participates in Zn(2+) binding. Substrate is bound by residues glutamate 163 and tyrosine 273.

It belongs to the AspA/AstE family. Aspartoacylase subfamily. Requires Zn(2+) as cofactor.

It carries out the reaction an N-acyl-L-aspartate + H2O = a carboxylate + L-aspartate. The polypeptide is Probable aspartoacylase (Prochlorococcus marinus (strain MIT 9301)).